Here is a 355-residue protein sequence, read N- to C-terminus: Plasmodial-specific protein LAV1-2 (355 aa).

EF-hand domains follow at residues 151 to 186 (EDTN…YADT) and 217 to 252 (NDLA…LGFD). 20 residues coordinate Ca(2+): aspartate 230, asparagine 232, asparagine 234, threonine 236, glutamate 241, aspartate 265, aspartate 267, serine 269, aspartate 271, glutamate 276, aspartate 295, aspartate 297, serine 299, glutamine 301, glutamate 306, aspartate 332, aspartate 334, serine 336, serine 338, and glutamate 343. EF-hand domains are found at residues 282-317 (LCLL…AHIP) and 319-354 (SARK…MFHD).

This chain is Plasmodial-specific protein LAV1-2, found in Physarum polycephalum (Slime mold).